A 551-amino-acid polypeptide reads, in one-letter code: F-box only protein 31 (551 aa).

The segment at 12–38 (QSGGCRRRQQRKGAGNGPELEDEEEED) is disordered. Positions 58 to 104 (PRSLLHLPPEILVEIFSSLPGTELPSLAQVCRKFRQILTTDTIWKRR) constitute an F-box domain. Zn(2+) contacts are provided by Cys229, His237, Cys253, and His259. Residues 402 to 459 (REQRQTGNEEDDGRGAGPDKAEHSQQPAPVLRPANEDANKVDGGDGEEQKPPNVQSFV) are disordered. Basic and acidic residues-rich tracts occupy residues 414–424 (GRGAGPDKAEH) and 435–451 (ANED…EEQK).

Belongs to the FBXO31 family. Part of a SCF (SKP1-cullin-F-box) protein ligase complex SCF(FBXO31).

The protein localises to the cytoplasm. Its pathway is protein modification; protein ubiquitination. In terms of biological role, substrate-recognition component of the SCF(FBXO31) protein ligase complex, which specifically mediates the ubiquitination of proteins amidated at their C-terminus in response to oxidative stress, leading to their degradation by the proteasome. Fbxo31 specifically recognizes and binds C-terminal peptides bearing an amide: C-terminal amidation in response to oxidative stress takes place following protein fragmentation. The SCF(FBXO31) also plays a role in G1 arrest following DNA damage by mediating ubiquitination of phosphorylated cyclin-D1 (ccnd1), promoting its degradation by the proteasome, resulting in G1 arrest. The SCF(FBXO31) complex is however not a major regulator of ccnd1 stability during the G1/S transition. The polypeptide is F-box only protein 31 (fbxo31) (Xenopus tropicalis (Western clawed frog)).